The chain runs to 554 residues: Asparagine synthetase B [glutamine-hydrolyzing] (554 aa).

Cys-2 serves as the catalytic For GATase activity. Residues 2 to 186 enclose the Glutamine amidotransferase type-2 domain; that stretch reads CSIFGVFDIK…AGSYLWSQDG (185 aa). L-glutamine is bound by residues 50–54, 75–77, and Asp-99; these read RLSIV and NGE. ATP-binding positions include Leu-233, Val-273, and 347–348; that span reads SG.

It belongs to the asparagine synthetase family. As to quaternary structure, homodimer.

It catalyses the reaction L-aspartate + L-glutamine + ATP + H2O = L-asparagine + L-glutamate + AMP + diphosphate + H(+). Its pathway is amino-acid biosynthesis; L-asparagine biosynthesis; L-asparagine from L-aspartate (L-Gln route): step 1/1. Its activity is regulated as follows. Glutamine-dependent asparagine synthesis activity can be inhibited by aspartic acid analogs (such as a sulfinate derivative and (2S,3R)-2-amino-3-methylsuccinate) in vitro; the inhibition is competitive with respect to aspartate. Functionally, catalyzes the ATP-dependent conversion of aspartate into asparagine, using glutamine as a source of nitrogen. Can also use ammonia as the nitrogen source in vitro, albeit with lower efficiency. As nucleotide substrates, ATP and dATP are utilized at a similar rate in both the glutamine- and ammonia-dependent reactions, whereas GTP utilization is only 15% that of ATP, and CTP, UTP, ITP and XTP are very poor or not substrates. Also exhibits glutaminase activity. The chain is Asparagine synthetase B [glutamine-hydrolyzing] (asnB) from Escherichia coli (strain K12).